The sequence spans 514 residues: ATP synthase subunit alpha (514 aa).

Residue 170–177 (GDRQIGKS) participates in ATP binding.

This sequence belongs to the ATPase alpha/beta chains family. F-type ATPases have 2 components, CF(1) - the catalytic core - and CF(0) - the membrane proton channel. CF(1) has five subunits: alpha(3), beta(3), gamma(1), delta(1), epsilon(1). CF(0) has three main subunits: a(1), b(2) and c(9-12). The alpha and beta chains form an alternating ring which encloses part of the gamma chain. CF(1) is attached to CF(0) by a central stalk formed by the gamma and epsilon chains, while a peripheral stalk is formed by the delta and b chains.

Its subcellular location is the cell inner membrane. It catalyses the reaction ATP + H2O + 4 H(+)(in) = ADP + phosphate + 5 H(+)(out). In terms of biological role, produces ATP from ADP in the presence of a proton gradient across the membrane. The alpha chain is a regulatory subunit. The protein is ATP synthase subunit alpha of Chromohalobacter salexigens (strain ATCC BAA-138 / DSM 3043 / CIP 106854 / NCIMB 13768 / 1H11).